The primary structure comprises 248 residues: MGYNKSLRYSRHNGTTCVIDNKHLKSLGSVLGDVRHKEELIREAQFDPIKDIANQYMVTEDPFRGPGKNVKITLFKEIRRIQPDTMKLVCNWSGKEFLRETWTRFISEEFPITTDQEIMDLWFELQLRPMQPNRCYKFTMQYALAANPDYVAHDVIRQHDPYYVGPDNRERINLSKRGLAFPLTCLQSIYNENFEEFFDQVLWPYFHRPLVYVGTTSAEIEEVMIEVALLFKIKEFAPDVPLFTGPAY.

The protein belongs to the polyhedrin family.

Component of the virus occlusion bodies, which are large proteinaceous structures, that protect the virus from the outside environment for extended periods until they are ingested by insect larvae. The protein is Granulin of Xestia c-nigrum granulosis virus (XnGV).